We begin with the raw amino-acid sequence, 323 residues long: Pectate lyase A (323 aa).

An N-terminal signal peptide occupies residues 1-31 (MTNFKWIVAAAGLLFGQVLAAPTATSTHAKR). N-linked (GlcNAc...) asparagine glycosylation occurs at asparagine 95. Ca(2+) is bound by residues aspartate 136, aspartate 165, and aspartate 169. The active site involves arginine 222.

The protein belongs to the polysaccharide lyase 1 family. It depends on Ca(2+) as a cofactor.

Its subcellular location is the secreted. The catalysed reaction is Eliminative cleavage of (1-&gt;4)-alpha-D-galacturonan to give oligosaccharides with 4-deoxy-alpha-D-galact-4-enuronosyl groups at their non-reducing ends.. Its function is as follows. Pectinolytic enzyme consist of four classes of enzymes: pectin lyase, polygalacturonase, pectin methylesterase and rhamnogalacturonase. Among pectinolytic enzymes, pectin lyase is the most important in depolymerization of pectin, since it cleaves internal glycosidic bonds of highly methylated pectins. Favors pectate, the anion, over pectin, the methyl ester. In Aspergillus niger, this protein is Pectate lyase A (plyA).